Here is a 318-residue protein sequence, read N- to C-terminus: MSGAESYRHITVLLNEAVDALAVREDGVYVDGTFGRGGHSRLILSRLGDAGRLIVFDKDPQAIAVAEELARSDKRVGVVHGGFASFQTALDGLGIGKVDGALFDLGISSPQIDDGSRGFSFRFDAPLDMRMDTTRGMSAAEWIAVASEQDLHEVIKNYGEERFSRQIVRAIVAQRAESPIDTTRKLAQIVAQNVRTRERGQDPATRTFQAIRIFINRELEEVGAVLPQVMCRLKEGGRLAVIAFHSLEDRIVKQFVKKYSQHEPLPSWAAVREADLPDPPLKIVGRALKPGEAEIAANPRARSAVLRVAERTAGPIPE.

Residues 37-39, Asp-57, Phe-83, Asp-104, and Gln-111 contribute to the S-adenosyl-L-methionine site; that span reads GGH.

Belongs to the methyltransferase superfamily. RsmH family.

It localises to the cytoplasm. It catalyses the reaction cytidine(1402) in 16S rRNA + S-adenosyl-L-methionine = N(4)-methylcytidine(1402) in 16S rRNA + S-adenosyl-L-homocysteine + H(+). Functionally, specifically methylates the N4 position of cytidine in position 1402 (C1402) of 16S rRNA. The polypeptide is Ribosomal RNA small subunit methyltransferase H (Neisseria gonorrhoeae (strain ATCC 700825 / FA 1090)).